The primary structure comprises 229 residues: Non-structural protein P8 (229 aa).

The tract at residues 14–26 (MKHNQDRVEELSL) is CCM-I. Positions 94–116 (IKRHVNEQILPKLKSDLSELKKK) are CCM-III. The next 2 helical transmembrane spans lie at 119–139 (IIHT…VCTL) and 162–182 (SLNP…MVCA). Residues 185-198 (ERALNQQIDMIKKE) are CCM-II.

This sequence belongs to the orbivirus NS3 family. In terms of assembly, forms homooligomers via coiled-coil motif. Interacts with host OPTN; this interaction inhibits innate immune response.

The protein localises to the host cell membrane. It localises to the host Golgi apparatus. In terms of biological role, plays a role in the inhibition of host innate immune response. Interacts with host OPTN and thus inhibits the recruitment of TBK1 to the host Golgi apparatus. In turn, downstream partner IRF3 cannot be activated and IFN-beta production is impaired. Facilitates viral particle release either by increasing plasma membrane permeability through a viroporin-like activity or by viral budding. The sequence is that of Non-structural protein P8 (Segment-10) from Bluetongue virus 10 (isolate USA) (BTV 10).